The chain runs to 440 residues: Transposon Ty1-BL Gag polyprotein (440 aa).

Polar residues-rich tracts occupy residues 20–31, 46–55, and 137–168; these read SVTSKEVQTTQD, VSTQANSQQP, and VGTH…TNQH. Disordered stretches follow at residues 20–84, 137–173, and 350–424; these read SVTS…QNGP, VGTH…RPPP, and QQES…TTEP. The RNA-binding stretch occupies residues 299–401; sequence NNGIPINNKV…NSQSRTARAH (103 aa). A compositionally biased stretch (basic and acidic residues) spans 363–372; sequence SPSDEKKDSR. The span at 373–411 shows a compositional bias: polar residues; it reads TYTNTTKPKSITRNSQKPNNSQSRTARAHNVSTFNNSPG.

As to quaternary structure, homotrimer.

The protein localises to the cytoplasm. Its function is as follows. Capsid protein (CA) is the structural component of the virus-like particle (VLP), forming the shell that encapsulates the retrotransposons dimeric RNA genome. The particles are assembled from trimer-clustered units and there are holes in the capsid shells that allow for the diffusion of macromolecules. CA also has nucleocapsid-like chaperone activity, promoting primer tRNA(i)-Met annealing to the multipartite primer-binding site (PBS), dimerization of Ty1 RNA and initiation of reverse transcription. In Saccharomyces cerevisiae (strain ATCC 204508 / S288c) (Baker's yeast), this protein is Transposon Ty1-BL Gag polyprotein (TY1A-BL).